The primary structure comprises 252 residues: Orotidine 5'-phosphate decarboxylase (252 aa).

Substrate is bound by residues aspartate 24, lysine 46, 73–82 (DLKFHDIPNT), threonine 137, arginine 199, glutamine 208, glycine 228, and arginine 229. The active-site Proton donor is the lysine 75.

It belongs to the OMP decarboxylase family. Type 1 subfamily. Homodimer.

The enzyme catalyses orotidine 5'-phosphate + H(+) = UMP + CO2. It functions in the pathway pyrimidine metabolism; UMP biosynthesis via de novo pathway; UMP from orotate: step 2/2. Functionally, catalyzes the decarboxylation of orotidine 5'-monophosphate (OMP) to uridine 5'-monophosphate (UMP). The sequence is that of Orotidine 5'-phosphate decarboxylase from Moorella thermoacetica (strain ATCC 39073 / JCM 9320).